A 217-amino-acid polypeptide reads, in one-letter code: NADPH-dependent 3-demethoxyubiquinone 3-hydroxylase, mitochondrial (217 aa).

Repeat copies occupy residues 49 to 130 (IIER…SALM) and 131 to 217 (GKEA…STRV). The segment at 49-217 (IIERIIRVDH…KTAIWLSTRV (169 aa)) is 2 X approximate tandem repeats. Residue Arg52 coordinates NADH. Residues Glu61, Glu91, His94, Glu143, Glu178, and His181 each coordinate Fe cation. Arg216 lines the NADH pocket.

Belongs to the COQ7 family. Component of a multi-subunit COQ enzyme complex. It depends on Fe cation as a cofactor.

The protein resides in the mitochondrion inner membrane. It carries out the reaction a 5-methoxy-2-methyl-3-(all-trans-polyprenyl)benzoquinone + NADH + O2 = a 3-demethylubiquinone + NAD(+) + H2O. It participates in cofactor biosynthesis; ubiquinone biosynthesis. In terms of biological role, catalyzes the hydroxylation of the 5-methoxy-2-methyl-3-(all-trans-polyprenyl)benzoquinone at the C6 position and participates in the biosynthesis of ubiquinone. Catalyzes the reaction through a substrate-mediated reduction pathway, whereby NADH shuttles electrons to 5-methoxy-2-methyl-3-(all-trans-decaprenyl)benzoquinone, which then transfers the electrons to the two Fe(3+) centers. The binding of 5-methoxy-2-methyl-3-(all-trans-polyprenyl)benzoquinone (DMQn) mediates reduction of the diiron center by nicotinamide adenine dinucleotide (NADH) and initiates oxygen activation for subsequent DMQ hydroxylation. Also has a structural role in the COQ enzyme complex, stabilizing other COQ polypeptides. The chain is NADPH-dependent 3-demethoxyubiquinone 3-hydroxylase, mitochondrial from Dictyostelium discoideum (Social amoeba).